The primary structure comprises 137 residues: Acidic phospholipase A2 PL-I (137 aa).

Residues 1–17 form the signal peptide; sequence AVCVSLLGASSIRPLPL. 7 cysteine pairs are disulfide-bonded: Cys28/Cys89, Cys44/Cys136, Cys46/Cys62, Cys61/Cys117, Cys68/Cys110, Cys78/Cys103, and Cys96/Cys108. Positions 45, 47, and 49 each coordinate Ca(2+). Residue His65 is part of the active site. Asp66 lines the Ca(2+) pocket. Asp111 is a catalytic residue.

The cofactor is Ca(2+). Expressed by the venom gland.

It localises to the secreted. The catalysed reaction is a 1,2-diacyl-sn-glycero-3-phosphocholine + H2O = a 1-acyl-sn-glycero-3-phosphocholine + a fatty acid + H(+). In terms of biological role, snake venom phospholipase A2 (PLA2) that may act in the hemostasis system of the prey. Exhibits hydrolytic activities, and prefers the anionic micelles (dPPC with deoxycholate) (793 umol/mg/min) to the zwitterionic micelles (dPPC with Triton X-100) (591 umol/mg/min). PLA2 catalyzes the calcium-dependent hydrolysis of the 2-acyl groups in 3-sn-phosphoglycerides. In Walterinnesia aegyptia (Desert black snake), this protein is Acidic phospholipase A2 PL-I.